The sequence spans 815 residues: Translation initiation factor IF-2 (815 aa).

A tr-type G domain is found at 315-482 (ARPPVVTIMG…AISLTAEVLE (168 aa)). Positions 324-331 (GHVDHGKT) are G1. Residue 324–331 (GHVDHGKT) participates in GTP binding. The tract at residues 349–353 (GITQH) is G2. A G3 region spans residues 370 to 373 (DTPG). GTP contacts are provided by residues 370-374 (DTPGH) and 424-427 (NKID). Residues 424-427 (NKID) are G4. The tract at residues 460–462 (SAY) is G5.

The protein belongs to the TRAFAC class translation factor GTPase superfamily. Classic translation factor GTPase family. IF-2 subfamily.

The protein localises to the cytoplasm. Functionally, one of the essential components for the initiation of protein synthesis. Protects formylmethionyl-tRNA from spontaneous hydrolysis and promotes its binding to the 30S ribosomal subunits. Also involved in the hydrolysis of GTP during the formation of the 70S ribosomal complex. The polypeptide is Translation initiation factor IF-2 (Ruthia magnifica subsp. Calyptogena magnifica).